Here is a 400-residue protein sequence, read N- to C-terminus: S-adenosylmethionine synthase (400 aa).

Position 136 to 141 (G136 to D141) interacts with ATP.

The protein belongs to the AdoMet synthase 2 family. The cofactor is Mg(2+).

The enzyme catalyses L-methionine + ATP + H2O = S-adenosyl-L-methionine + phosphate + diphosphate. Its pathway is amino-acid biosynthesis; S-adenosyl-L-methionine biosynthesis; S-adenosyl-L-methionine from L-methionine: step 1/1. Its function is as follows. Catalyzes the formation of S-adenosylmethionine from methionine and ATP. This chain is S-adenosylmethionine synthase, found in Thermoplasma volcanium (strain ATCC 51530 / DSM 4299 / JCM 9571 / NBRC 15438 / GSS1).